Reading from the N-terminus, the 634-residue chain is DNA-directed RNA polymerase subunit gamma (634 aa).

Positions 74, 76, 89, and 92 each coordinate Zn(2+). Positions 471, 473, and 475 each coordinate Mg(2+).

This sequence belongs to the RNA polymerase beta' chain family. RpoC1 subfamily. In terms of assembly, in cyanobacteria the RNAP catalytic core is composed of 2 alpha, 1 beta, 1 beta', 1 gamma and 1 omega subunit. When a sigma factor is associated with the core the holoenzyme is formed, which can initiate transcription. The cofactor is Mg(2+). Zn(2+) is required as a cofactor.

It catalyses the reaction RNA(n) + a ribonucleoside 5'-triphosphate = RNA(n+1) + diphosphate. In terms of biological role, DNA-dependent RNA polymerase catalyzes the transcription of DNA into RNA using the four ribonucleoside triphosphates as substrates. This Parasynechococcus marenigrum (strain WH8102) protein is DNA-directed RNA polymerase subunit gamma.